Reading from the N-terminus, the 397-residue chain is Succinate--CoA ligase [ADP-forming] subunit beta (397 aa).

The 246-residue stretch at 9–254 (KALLKSFGAP…ETEQDAKELE (246 aa)) folds into the ATP-grasp domain. ATP-binding positions include Lys46, 53 to 55 (GRG), Glu109, Ala112, and Glu117. Mg(2+) contacts are provided by Asn209 and Asp223. Substrate-binding positions include Asn274 and 331-333 (GIM).

The protein belongs to the succinate/malate CoA ligase beta subunit family. In terms of assembly, heterotetramer of two alpha and two beta subunits. Mg(2+) is required as a cofactor.

It carries out the reaction succinate + ATP + CoA = succinyl-CoA + ADP + phosphate. It catalyses the reaction GTP + succinate + CoA = succinyl-CoA + GDP + phosphate. The protein operates within carbohydrate metabolism; tricarboxylic acid cycle; succinate from succinyl-CoA (ligase route): step 1/1. Functionally, succinyl-CoA synthetase functions in the citric acid cycle (TCA), coupling the hydrolysis of succinyl-CoA to the synthesis of either ATP or GTP and thus represents the only step of substrate-level phosphorylation in the TCA. The beta subunit provides nucleotide specificity of the enzyme and binds the substrate succinate, while the binding sites for coenzyme A and phosphate are found in the alpha subunit. This Hyphomonas neptunium (strain ATCC 15444) protein is Succinate--CoA ligase [ADP-forming] subunit beta.